The primary structure comprises 359 residues: Ribosomal RNA large subunit methyltransferase M (359 aa).

S-adenosyl-L-methionine is bound by residues S186, 219 to 222, D238, D258, and D275; that span reads CPGG. Residue K304 is the Proton acceptor of the active site.

This sequence belongs to the class I-like SAM-binding methyltransferase superfamily. RNA methyltransferase RlmE family. RlmM subfamily. As to quaternary structure, monomer.

It localises to the cytoplasm. It carries out the reaction cytidine(2498) in 23S rRNA + S-adenosyl-L-methionine = 2'-O-methylcytidine(2498) in 23S rRNA + S-adenosyl-L-homocysteine + H(+). Its function is as follows. Catalyzes the 2'-O-methylation at nucleotide C2498 in 23S rRNA. In Vibrio vulnificus (strain YJ016), this protein is Ribosomal RNA large subunit methyltransferase M.